The primary structure comprises 132 residues: Fluoride-specific ion channel FluC (132 aa).

4 consecutive transmembrane segments (helical) span residues 6–26 (VLQL…RFIV), 41–61 (GTLV…ILMI), 73–93 (FLIV…FETY), and 104–124 (AMLN…LGIW). Residues glycine 80 and threonine 83 each contribute to the Na(+) site.

It belongs to the fluoride channel Fluc/FEX (TC 1.A.43) family.

Its subcellular location is the cell inner membrane. The enzyme catalyses fluoride(in) = fluoride(out). Na(+) is not transported, but it plays an essential structural role and its presence is essential for fluoride channel function. In terms of biological role, fluoride-specific ion channel. Important for reducing fluoride concentration in the cell, thus reducing its toxicity. This Hydrogenovibrio crunogenus (strain DSM 25203 / XCL-2) (Thiomicrospira crunogena) protein is Fluoride-specific ion channel FluC.